The following is a 214-amino-acid chain: Orotidine 5'-phosphate decarboxylase (214 aa).

Residues Asp-11, Lys-33, 59 to 68 (DFKIADIPNT), Ser-114, 164 to 174 (PGIGSQGGRAS), Gly-187, and Arg-188 each bind substrate. The Proton donor role is filled by Lys-61.

It belongs to the OMP decarboxylase family. Type 1 subfamily. In terms of assembly, homodimer.

It carries out the reaction orotidine 5'-phosphate + H(+) = UMP + CO2. It functions in the pathway pyrimidine metabolism; UMP biosynthesis via de novo pathway; UMP from orotate: step 2/2. Its function is as follows. Catalyzes the decarboxylation of orotidine 5'-monophosphate (OMP) to uridine 5'-monophosphate (UMP). The polypeptide is Orotidine 5'-phosphate decarboxylase (Thermoplasma acidophilum (strain ATCC 25905 / DSM 1728 / JCM 9062 / NBRC 15155 / AMRC-C165)).